The sequence spans 469 residues: 3-isopropylmalate dehydratase large subunit (469 aa).

[4Fe-4S] cluster-binding residues include Cys-347, Cys-408, and Cys-411.

This sequence belongs to the aconitase/IPM isomerase family. LeuC type 1 subfamily. As to quaternary structure, heterodimer of LeuC and LeuD. [4Fe-4S] cluster serves as cofactor.

It catalyses the reaction (2R,3S)-3-isopropylmalate = (2S)-2-isopropylmalate. It participates in amino-acid biosynthesis; L-leucine biosynthesis; L-leucine from 3-methyl-2-oxobutanoate: step 2/4. Functionally, catalyzes the isomerization between 2-isopropylmalate and 3-isopropylmalate, via the formation of 2-isopropylmaleate. The polypeptide is 3-isopropylmalate dehydratase large subunit (Haemophilus influenzae (strain ATCC 51907 / DSM 11121 / KW20 / Rd)).